A 657-amino-acid polypeptide reads, in one-letter code: Sodium/glucose cotransporter 4 (657 aa).

The Extracellular portion of the chain corresponds to 1 to 24; the sequence is MPASPEPVTATPEPEEVPAKFTLE. A helical transmembrane segment spans residues 25–45; sequence AADIAVVVVYFVFVLAVGIWS. The Cytoplasmic portion of the chain corresponds to 46–79; the sequence is SIRANRGTVGGYFLAGRSMTWWPIGASLMSSNVG. A helical transmembrane segment spans residues 80–100; it reads SGLFIGLAGTGAAGGLAVGGF. The Extracellular segment spans residues 101-104; sequence EWNA. A helical transmembrane segment spans residues 105-125; the sequence is AWVLIALGWIFVPVYISAGVV. The Cytoplasmic segment spans residues 126 to 147; it reads TMPEYLRKRFGGQRIRIYMSVL. Residues 148–168 traverse the membrane as a helical segment; the sequence is SLILYILTKISTDIFSGALFI. Topologically, residues 169–180 are extracellular; the sequence is QVSLGWDLYLST. The chain crosses the membrane as a helical span at residues 181–201; sequence VILLAVTALYTIAGGLTAVIY. Residues 202-207 lie on the Cytoplasmic side of the membrane; the sequence is TDALQT. A helical membrane pass occupies residues 208 to 228; sequence VIMVIGAFVLMFIAFDKVGWY. Residues 229–265 are Extracellular-facing; sequence EGLLVQYEKAAPALTVPNTTCHLPRSDAFHIFRDPVT. Asn246 is a glycosylation site (N-linked (GlcNAc...) asparagine). The chain crosses the membrane as a helical span at residues 266 to 286; sequence GDIPWPGLIFGLTVLATWVWC. The Cytoplasmic portion of the chain corresponds to 287-307; that stretch reads TDQVIVQRSLSAKNLSHAKAG. A helical transmembrane segment spans residues 308-328; that stretch reads SVLGGYLKVFPMFFVVMPGMI. The Extracellular segment spans residues 329–373; it reads SRALYPDEVACVDPDECQKICGAKVGCSNIAYPKLVVELMPVGMR. Residues 374-396 form a helical membrane-spanning segment; that stretch reads GLMIAVMMAALMSSLTSIFNSSS. At 397 to 417 the chain is on the cytoplasmic side; sequence TLFTMDIWQRIRPRASEKELM. A helical membrane pass occupies residues 418–438; the sequence is VVGRVFILLLVALSIVWIPVI. The Extracellular portion of the chain corresponds to 439–451; the sequence is QTANSGQLFDYIQ. Residues 452 to 472 form a helical membrane-spanning segment; that stretch reads AITSFLSPPITTVFIMAIFWG. Residues 473–478 are Cytoplasmic-facing; it reads RVNEQG. A helical transmembrane segment spans residues 479-499; it reads AFWGLMVGLVVGMVRMIMEFV. Over 500–520 the chain is Extracellular; that stretch reads YGTPSCGETDLRPSLLKDVHY. The chain crosses the membrane as a helical span at residues 521–541; it reads LYFALILLALTVLIITAVSLC. The Cytoplasmic portion of the chain corresponds to 542–636; sequence TAPIPEKHLV…SIEEDHMWKT (95 aa). Residues 637–657 form a helical membrane-spanning segment; it reads VCNVNALILLTANVFLWGYFA.

Belongs to the sodium:solute symporter (SSF) (TC 2.A.21) family.

Its subcellular location is the membrane. Probable sodium-dependent sugar transporter. The protein is Sodium/glucose cotransporter 4 (slc5a9) of Danio rerio (Zebrafish).